A 78-amino-acid chain; its full sequence is Large ribosomal subunit protein bL28 (78 aa).

Residues 1-20 (MSRVCQVTGKGPVTGNNISH) form a disordered region.

The protein belongs to the bacterial ribosomal protein bL28 family.

The polypeptide is Large ribosomal subunit protein bL28 (Stutzerimonas stutzeri (strain A1501) (Pseudomonas stutzeri)).